The following is a 141-amino-acid chain: MLNHDEKQLIKHAWEKVLGHQEDFGAEALERMFAVYPQTKTYFPHFDLHHDSEQIRHHGKKVVTALGDAVRHMDNLSEALSELSNLHAYNLRVDPVNFKLLSHCFQVVLAVHLADEYTPQVHVAYDKFLAAVSAVLAEKYR.

The 141-residue stretch at 1 to 141 (MLNHDEKQLI…VSAVLAEKYR (141 aa)) folds into the Globin domain. Heme b-binding residues include H58 and H87.

The protein belongs to the globin family. In terms of assembly, heterotetramer of two alpha-D chains and two beta chains. Red blood cells.

In terms of biological role, involved in oxygen transport from the lung to the various peripheral tissues. This Chrysemys picta bellii (Western painted turtle) protein is Hemoglobin subunit alpha-D (HBAD).